The sequence spans 206 residues: Imidazole glycerol phosphate synthase subunit HisH (206 aa).

A Glutamine amidotransferase type-1 domain is found at 1-206; that stretch reads MIVIIDYGMG…LRILKNFGDM (206 aa). Cys-79 (nucleophile) is an active-site residue. Residues His-188 and Glu-190 contribute to the active site.

Heterodimer of HisH and HisF.

It localises to the cytoplasm. The catalysed reaction is 5-[(5-phospho-1-deoxy-D-ribulos-1-ylimino)methylamino]-1-(5-phospho-beta-D-ribosyl)imidazole-4-carboxamide + L-glutamine = D-erythro-1-(imidazol-4-yl)glycerol 3-phosphate + 5-amino-1-(5-phospho-beta-D-ribosyl)imidazole-4-carboxamide + L-glutamate + H(+). It catalyses the reaction L-glutamine + H2O = L-glutamate + NH4(+). It participates in amino-acid biosynthesis; L-histidine biosynthesis; L-histidine from 5-phospho-alpha-D-ribose 1-diphosphate: step 5/9. Its function is as follows. IGPS catalyzes the conversion of PRFAR and glutamine to IGP, AICAR and glutamate. The HisH subunit catalyzes the hydrolysis of glutamine to glutamate and ammonia as part of the synthesis of IGP and AICAR. The resulting ammonia molecule is channeled to the active site of HisF. This Syntrophotalea carbinolica (strain DSM 2380 / NBRC 103641 / GraBd1) (Pelobacter carbinolicus) protein is Imidazole glycerol phosphate synthase subunit HisH.